We begin with the raw amino-acid sequence, 380 residues long: MQDTLLTLDTPAAVIDLDRMQRNIARMQQRMDAQGVRLRPHVKTSKSVPVAAAQRAAGASGITVSTLKEAEQFFAAGTTDILYAVSMAPHRLPQALQLRRRGCDLKLIVDSVAAAQAIAAFGREQGEAFEVWIEIDTDGHRSGVGADDTPLLLAIGRTLHDGGMRLGGVLTHAGSSYELDTPEALQALAERERAGCVQAAEALRAAGLPCPVVSVGSTPTALAASRLDGVTEVRAGVYVFFDLVMRNIGVCAAEDVALSVLATVIGHQADKGWAIVDAGWMAMSRDRGTARQKQDFGYGQVCDLQGRVMPGFVLTGANQEHGILARADGAAEADIATRFPLGTRLRILPNHACATGAQFPAYQALAADGSVQTWERLHGW.

Lysine 43 is modified (N6-(pyridoxal phosphate)lysine).

It belongs to the DSD1 family. In terms of assembly, monomer. Pyridoxal 5'-phosphate serves as cofactor. The cofactor is Mn(2+). It depends on Co(2+) as a cofactor. Requires Ni(2+) as cofactor.

The catalysed reaction is (3R)-3-hydroxy-D-aspartate = oxaloacetate + NH4(+). With respect to regulation, strongly inhibited by hydroxylamine. Modestly inhibited by EDTA. Its function is as follows. Catalyzes the deamination of D-threo-3-hydroxyaspartate (D-THA). Also exhibits dehydratase activity towards L-threo-3-hydroxyaspartate (L-THA), L-erythro-3-hydroxyaspartate (L-EHA) and D-serine. This chain is D-threo-3-hydroxyaspartate dehydratase (dthadh), found in Delftia sp. (strain HT23).